A 175-amino-acid polypeptide reads, in one-letter code: ATP synthase subunit b, chloroplastic (175 aa).

Residues L21–G40 traverse the membrane as a helical segment.

This sequence belongs to the ATPase B chain family. As to quaternary structure, F-type ATPases have 2 components, F(1) - the catalytic core - and F(0) - the membrane proton channel. F(1) has five subunits: alpha(3), beta(3), gamma(1), delta(1), epsilon(1). F(0) has four main subunits: a(1), b(1), b'(1) and c(10-14). The alpha and beta chains form an alternating ring which encloses part of the gamma chain. F(1) is attached to F(0) by a central stalk formed by the gamma and epsilon chains, while a peripheral stalk is formed by the delta, b and b' chains.

Its subcellular location is the plastid. It localises to the chloroplast thylakoid membrane. Functionally, f(1)F(0) ATP synthase produces ATP from ADP in the presence of a proton or sodium gradient. F-type ATPases consist of two structural domains, F(1) containing the extramembraneous catalytic core and F(0) containing the membrane proton channel, linked together by a central stalk and a peripheral stalk. During catalysis, ATP synthesis in the catalytic domain of F(1) is coupled via a rotary mechanism of the central stalk subunits to proton translocation. Component of the F(0) channel, it forms part of the peripheral stalk, linking F(1) to F(0). The sequence is that of ATP synthase subunit b, chloroplastic from Cyanidium caldarium (Red alga).